A 142-amino-acid chain; its full sequence is MKTFTATPETVTRDWFVVDADGKTLGRIATEIAIRLRGKHKPEYTPHVDTGDYIIVVNAEKVTVTGNKAKGKTYYSHSGFPGGIKQISFEKLQAQKPEMIIEKAVKGMLPKGPLGRAMFRKLKVYAGAEHNHTAQQPQVLDI.

The protein belongs to the universal ribosomal protein uL13 family. Part of the 50S ribosomal subunit.

Functionally, this protein is one of the early assembly proteins of the 50S ribosomal subunit, although it is not seen to bind rRNA by itself. It is important during the early stages of 50S assembly. In Shewanella baltica (strain OS185), this protein is Large ribosomal subunit protein uL13.